We begin with the raw amino-acid sequence, 143 residues long: Large ribosomal subunit protein uL11 (143 aa).

It belongs to the universal ribosomal protein uL11 family. As to quaternary structure, part of the ribosomal stalk of the 50S ribosomal subunit. Interacts with L10 and the large rRNA to form the base of the stalk. L10 forms an elongated spine to which L12 dimers bind in a sequential fashion forming a multimeric L10(L12)X complex. Post-translationally, one or more lysine residues are methylated.

Functionally, forms part of the ribosomal stalk which helps the ribosome interact with GTP-bound translation factors. The sequence is that of Large ribosomal subunit protein uL11 from Methylococcus capsulatus (strain ATCC 33009 / NCIMB 11132 / Bath).